A 72-amino-acid polypeptide reads, in one-letter code: Translation initiation factor IF-1 (72 aa).

The S1-like domain occupies 1 to 72; that stretch reads MSKEELLEFP…TKGRITYRFK (72 aa).

The protein belongs to the IF-1 family. In terms of assembly, component of the 30S ribosomal translation pre-initiation complex which assembles on the 30S ribosome in the order IF-2 and IF-3, IF-1 and N-formylmethionyl-tRNA(fMet); mRNA recruitment can occur at any time during PIC assembly.

The protein localises to the cytoplasm. Functionally, one of the essential components for the initiation of protein synthesis. Stabilizes the binding of IF-2 and IF-3 on the 30S subunit to which N-formylmethionyl-tRNA(fMet) subsequently binds. Helps modulate mRNA selection, yielding the 30S pre-initiation complex (PIC). Upon addition of the 50S ribosomal subunit IF-1, IF-2 and IF-3 are released leaving the mature 70S translation initiation complex. This is Translation initiation factor IF-1 from Parvibaculum lavamentivorans (strain DS-1 / DSM 13023 / NCIMB 13966).